The chain runs to 90 residues: RNA-binding protein Hfq (90 aa).

The 61-residue stretch at 10–70 (DGFLNLLRRE…LSTITPARPL (61 aa)) folds into the Sm domain.

It belongs to the Hfq family. In terms of assembly, homohexamer.

Its function is as follows. RNA chaperone that binds small regulatory RNA (sRNAs) and mRNAs to facilitate mRNA translational regulation in response to envelope stress, environmental stress and changes in metabolite concentrations. Also binds with high specificity to tRNAs. The polypeptide is RNA-binding protein Hfq (Symbiobacterium thermophilum (strain DSM 24528 / JCM 14929 / IAM 14863 / T)).